The primary structure comprises 314 residues: tRNA dimethylallyltransferase (314 aa).

Residue 12–19 (GPTASGKT) participates in ATP binding. 14 to 19 (TASGKT) is a substrate binding site. Interaction with substrate tRNA regions lie at residues 37–40 (DSAL) and 162–166 (QRIIR).

Belongs to the IPP transferase family. Monomer. Requires Mg(2+) as cofactor.

The enzyme catalyses adenosine(37) in tRNA + dimethylallyl diphosphate = N(6)-dimethylallyladenosine(37) in tRNA + diphosphate. Its function is as follows. Catalyzes the transfer of a dimethylallyl group onto the adenine at position 37 in tRNAs that read codons beginning with uridine, leading to the formation of N6-(dimethylallyl)adenosine (i(6)A). The chain is tRNA dimethylallyltransferase from Acinetobacter baumannii (strain SDF).